Here is an 88-residue protein sequence, read N- to C-terminus: Small ribosomal subunit protein bS20 (88 aa).

A disordered region spans residues 1-25 (MANTPSAKKAARKIERRTAVNRARR).

It belongs to the bacterial ribosomal protein bS20 family.

Binds directly to 16S ribosomal RNA. In Azorhizobium caulinodans (strain ATCC 43989 / DSM 5975 / JCM 20966 / LMG 6465 / NBRC 14845 / NCIMB 13405 / ORS 571), this protein is Small ribosomal subunit protein bS20.